We begin with the raw amino-acid sequence, 176 residues long: Replication restart protein PriC (176 aa).

Belongs to the PriC family. In terms of assembly, component of the replication restart primosome, which is composed of PriA, PriB, PriC, DnaB and DnaT; DnaG primase associates transiently with this complex. Interacts with the C-terminus of SSB; this interaction is required to load the main replicative helicase onto substrate replication forks. Interacts with helicase DnaB alone and in the DnaB-DnaC complex, probably 1:1 binding with DnaB. Interacts with DnaT.

Its function is as follows. Involved in the restart of stalled replication forks, which reloads the DnaB replicative helicase on sites other than the origin of replication. Recognizes abandoned replication forks and remodels DNA single-stranded binding protein (SSB) on ssDNA to uncover a loading site for DnaB. There are several restart pathways, the PriA-PriC pathway is a minor restart pathway. Part of the minor PriC-Rep pathway for restart of stalled replication forks, which has a different substrate specificity than PriA. Part of the major restart pathway with PriA, PriB, DnaB, DnaT and DnaG primase. priB and priC have redundant roles in the cell. Binds 7-9 nucleotides of single-stranded (ss)DNA. The protein is Replication restart protein PriC of Klebsiella pneumoniae subsp. pneumoniae (strain ATCC 700721 / MGH 78578).